Reading from the N-terminus, the 176-residue chain is NAD(P)H-quinone oxidoreductase subunit 6, chloroplastic (176 aa).

5 helical membrane-spanning segments follow: residues 10 to 30, 32 to 52, 61 to 81, 92 to 112, and 152 to 172; these read FLLV…VLLP, PIYS…FYIL, AQLL…VMFM, LWTV…ISLI, and FFLP…GAIA.

The protein belongs to the complex I subunit 6 family. In terms of assembly, NDH is composed of at least 16 different subunits, 5 of which are encoded in the nucleus.

The protein resides in the plastid. It is found in the chloroplast thylakoid membrane. It catalyses the reaction a plastoquinone + NADH + (n+1) H(+)(in) = a plastoquinol + NAD(+) + n H(+)(out). It carries out the reaction a plastoquinone + NADPH + (n+1) H(+)(in) = a plastoquinol + NADP(+) + n H(+)(out). NDH shuttles electrons from NAD(P)H:plastoquinone, via FMN and iron-sulfur (Fe-S) centers, to quinones in the photosynthetic chain and possibly in a chloroplast respiratory chain. The immediate electron acceptor for the enzyme in this species is believed to be plastoquinone. Couples the redox reaction to proton translocation, and thus conserves the redox energy in a proton gradient. The chain is NAD(P)H-quinone oxidoreductase subunit 6, chloroplastic (ndhG) from Solanum bulbocastanum (Wild potato).